Reading from the N-terminus, the 505-residue chain is Maturase K (505 aa).

It belongs to the intron maturase 2 family. MatK subfamily.

The protein resides in the plastid. The protein localises to the chloroplast. Usually encoded in the trnK tRNA gene intron. Probably assists in splicing its own and other chloroplast group II introns. This chain is Maturase K, found in Elaeagnus umbellata (Autumn olive).